We begin with the raw amino-acid sequence, 160 residues long: Cytochrome b6-f complex subunit 4 (160 aa).

Transmembrane regions (helical) follow at residues 36–56 (LLYI…GLAV), 95–115 (LLGV…PFLE), and 131–151 (TVFL…TLPI).

It belongs to the cytochrome b family. PetD subfamily. As to quaternary structure, the 4 large subunits of the cytochrome b6-f complex are cytochrome b6, subunit IV (17 kDa polypeptide, petD), cytochrome f and the Rieske protein, while the 4 small subunits are petG, petL, petM and petN. The complex functions as a dimer.

The protein localises to the plastid. Its subcellular location is the chloroplast thylakoid membrane. In terms of biological role, component of the cytochrome b6-f complex, which mediates electron transfer between photosystem II (PSII) and photosystem I (PSI), cyclic electron flow around PSI, and state transitions. The chain is Cytochrome b6-f complex subunit 4 from Pisum sativum (Garden pea).